A 1011-amino-acid chain; its full sequence is Protein FAM83B (1011 aa).

The segment at 1 to 283 (METSSMLSSL…RTLYARSCVP (283 aa)) is DUF1669. Residues 1 to 284 (METSSMLSSL…TLYARSCVPS (284 aa)) are required for interaction with RAF1 and for the function. Phosphoserine is present on residues Ser-334, Ser-422, Ser-424, Ser-466, and Ser-543. Positions 555–585 (EVNSCTTGSSNSTIIGSQGSETPKEVPDTPT) are disordered. Residues 557–574 (NSCTTGSSNSTIIGSQGS) show a composition bias toward low complexity. A Phosphoserine modification is found at Ser-664. Disordered regions lie at residues 691–738 (NRVR…TKSV) and 750–769 (ESNK…SFLK). Positions 694–705 (RQPEKPKEDLLK) are enriched in basic and acidic residues. Polar residues-rich tracts occupy residues 706 to 715 (SSKSMHNVTH) and 727 to 738 (RNSPSGTTTKSV). Residues 750–762 (ESNKELASKKEVK) show a composition bias toward basic and acidic residues. Thr-782 carries the phosphothreonine modification. Ser-802 bears the Phosphoserine mark. The segment at 807-928 (LVSEGEENQK…TSSELLRSHS (122 aa)) is disordered. Basic and acidic residues predominate over residues 813–828 (ENQKPKKSDTKVDSSP). 3 positions are modified to phosphoserine: Ser-852, Ser-869, and Ser-915. A compositionally biased stretch (low complexity) spans 913–923 (TSSPRPTSSEL).

The protein belongs to the FAM83 family. As to quaternary structure, interacts with EGFR; positively regulates EGFR inducing its autophosphorylation in absence of stimulation by EGF. Interacts with RAF1; displaces 14-3-3 proteins from RAF1 and activates RAF1 within the RAS/MAPK signaling cascade. Interacts with AKT1, PIK3CA and PIK3R1; activates the PI3K/AKT signaling cascade. Directly interacts (via DUF1669) with casein kinase isoforms CSNK1A1, CSNK1A1L, CSNK1D and CSNK1E. Post-translationally, phosphorylated in vitro by CSNK1A1.

It localises to the cytoplasm. It is found in the membrane. Its function is as follows. Probable proto-oncogene that functions in the epidermal growth factor receptor/EGFR signaling pathway. Activates both the EGFR itself and downstream RAS/MAPK and PI3K/AKT/TOR signaling cascades. In Homo sapiens (Human), this protein is Protein FAM83B.